We begin with the raw amino-acid sequence, 321 residues long: Lipoyl synthase (321 aa).

7 residues coordinate [4Fe-4S] cluster: cysteine 68, cysteine 73, cysteine 79, cysteine 94, cysteine 98, cysteine 101, and serine 308. Residues 80–297 (FNHGTATFMI…KVLADELGFT (218 aa)) enclose the Radical SAM core domain.

The protein belongs to the radical SAM superfamily. Lipoyl synthase family. The cofactor is [4Fe-4S] cluster.

It localises to the cytoplasm. The catalysed reaction is [[Fe-S] cluster scaffold protein carrying a second [4Fe-4S](2+) cluster] + N(6)-octanoyl-L-lysyl-[protein] + 2 oxidized [2Fe-2S]-[ferredoxin] + 2 S-adenosyl-L-methionine + 4 H(+) = [[Fe-S] cluster scaffold protein] + N(6)-[(R)-dihydrolipoyl]-L-lysyl-[protein] + 4 Fe(3+) + 2 hydrogen sulfide + 2 5'-deoxyadenosine + 2 L-methionine + 2 reduced [2Fe-2S]-[ferredoxin]. Its pathway is protein modification; protein lipoylation via endogenous pathway; protein N(6)-(lipoyl)lysine from octanoyl-[acyl-carrier-protein]: step 2/2. Catalyzes the radical-mediated insertion of two sulfur atoms into the C-6 and C-8 positions of the octanoyl moiety bound to the lipoyl domains of lipoate-dependent enzymes, thereby converting the octanoylated domains into lipoylated derivatives. The sequence is that of Lipoyl synthase from Shewanella sp. (strain ANA-3).